Reading from the N-terminus, the 293-residue chain is Ribosomal protein L11 methyltransferase (293 aa).

S-adenosyl-L-methionine is bound by residues T145, G166, D188, and N230.

The protein belongs to the methyltransferase superfamily. PrmA family.

The protein localises to the cytoplasm. The catalysed reaction is L-lysyl-[protein] + 3 S-adenosyl-L-methionine = N(6),N(6),N(6)-trimethyl-L-lysyl-[protein] + 3 S-adenosyl-L-homocysteine + 3 H(+). Its function is as follows. Methylates ribosomal protein L11. The chain is Ribosomal protein L11 methyltransferase from Actinobacillus succinogenes (strain ATCC 55618 / DSM 22257 / CCUG 43843 / 130Z).